Reading from the N-terminus, the 366-residue chain is Histidinol-phosphate aminotransferase (366 aa).

Lys222 carries the N6-(pyridoxal phosphate)lysine modification.

Belongs to the class-II pyridoxal-phosphate-dependent aminotransferase family. Histidinol-phosphate aminotransferase subfamily. As to quaternary structure, homodimer. Pyridoxal 5'-phosphate serves as cofactor.

It carries out the reaction L-histidinol phosphate + 2-oxoglutarate = 3-(imidazol-4-yl)-2-oxopropyl phosphate + L-glutamate. It functions in the pathway amino-acid biosynthesis; L-histidine biosynthesis; L-histidine from 5-phospho-alpha-D-ribose 1-diphosphate: step 7/9. In Lysinibacillus sphaericus (strain C3-41), this protein is Histidinol-phosphate aminotransferase.